The chain runs to 204 residues: MSREQLSLEIIEAGRFLYGRGWSPATSSNYSARLSASEALLTVSGKHKGQLGPDDVLATDLAGNSLEPGKKPSAETLLHTQLYSCRPQVGAVLHTHSVNATVLSRLTTADHLVFEDYELQKAFSGVVTHESQVVVPIFDNDQDIARLAAKVQPWLDTHPECAGYLIRGHGLYTWGAKMSDALRQIEAFEFLFECELKMRAVMNR.

Zn(2+) contacts are provided by His-94 and His-96.

It belongs to the aldolase class II family. MtnB subfamily. The cofactor is Zn(2+).

The catalysed reaction is 5-(methylsulfanyl)-D-ribulose 1-phosphate = 5-methylsulfanyl-2,3-dioxopentyl phosphate + H2O. Its pathway is amino-acid biosynthesis; L-methionine biosynthesis via salvage pathway; L-methionine from S-methyl-5-thio-alpha-D-ribose 1-phosphate: step 2/6. In terms of biological role, catalyzes the dehydration of methylthioribulose-1-phosphate (MTRu-1-P) into 2,3-diketo-5-methylthiopentyl-1-phosphate (DK-MTP-1-P). This chain is Methylthioribulose-1-phosphate dehydratase, found in Pseudomonas syringae pv. syringae (strain B728a).